The sequence spans 343 residues: Uroporphyrinogen decarboxylase (343 aa).

Substrate is bound by residues 25–29 (RQAGR), F44, D75, Y150, S205, and H320.

It belongs to the uroporphyrinogen decarboxylase family. As to quaternary structure, homodimer.

Its subcellular location is the cytoplasm. It catalyses the reaction uroporphyrinogen III + 4 H(+) = coproporphyrinogen III + 4 CO2. Its pathway is porphyrin-containing compound metabolism; protoporphyrin-IX biosynthesis; coproporphyrinogen-III from 5-aminolevulinate: step 4/4. In terms of biological role, catalyzes the decarboxylation of four acetate groups of uroporphyrinogen-III to yield coproporphyrinogen-III. The chain is Uroporphyrinogen decarboxylase from Mesorhizobium japonicum (strain LMG 29417 / CECT 9101 / MAFF 303099) (Mesorhizobium loti (strain MAFF 303099)).